We begin with the raw amino-acid sequence, 345 residues long: Ribosome production factor 1 (345 aa).

Disordered regions lie at residues 1-57 (MAKA…ISEI) and 70-105 (WKQQ…PKTI). The span at 87-97 (REREALGDKAP) shows a compositional bias: basic and acidic residues. The Brix domain maps to 142 to 325 (PKILITTSDR…LRSLQKGTFD (184 aa)). The segment at 303–320 (VGIQELGPRFTLKLRSLQ) is RNA-binding.

The protein localises to the nucleus. The protein resides in the nucleolus. May be required for ribosome biogenesis. In Rattus norvegicus (Rat), this protein is Ribosome production factor 1 (Rpf1).